A 219-amino-acid chain; its full sequence is Uracil-DNA glycosylase (219 aa).

Asp-64 serves as the catalytic Proton acceptor.

Belongs to the uracil-DNA glycosylase (UDG) superfamily. UNG family.

It is found in the cytoplasm. The enzyme catalyses Hydrolyzes single-stranded DNA or mismatched double-stranded DNA and polynucleotides, releasing free uracil.. Functionally, excises uracil residues from the DNA which can arise as a result of misincorporation of dUMP residues by DNA polymerase or due to deamination of cytosine. This chain is Uracil-DNA glycosylase, found in Leuconostoc citreum (strain KM20).